Reading from the N-terminus, the 217-residue chain is Pyrophosphatase PpaX (217 aa).

The Nucleophile role is filled by Asp-11.

This sequence belongs to the HAD-like hydrolase superfamily. PpaX family. Mg(2+) serves as cofactor.

The catalysed reaction is diphosphate + H2O = 2 phosphate + H(+). Its function is as follows. Hydrolyzes pyrophosphate formed during P-Ser-HPr dephosphorylation by HPrK/P. Might play a role in controlling the intracellular pyrophosphate pool. The chain is Pyrophosphatase PpaX from Listeria monocytogenes serotype 4a (strain HCC23).